The following is a 405-amino-acid chain: Elongation factor Tu (405 aa).

The tr-type G domain occupies 10-215 (KPHVNVGTIG…AVDSYIPTPE (206 aa)). The interval 19–26 (GHVDHGKT) is G1. A GTP-binding site is contributed by 19 to 26 (GHVDHGKT). Thr26 contributes to the Mg(2+) binding site. The segment at 61-65 (GITIN) is G2. The interval 82–85 (DCPG) is G3. Residues 82–86 (DCPGH) and 137–140 (NKVD) contribute to the GTP site. The G4 stretch occupies residues 137–140 (NKVD). The G5 stretch occupies residues 175–177 (SAL).

The protein belongs to the TRAFAC class translation factor GTPase superfamily. Classic translation factor GTPase family. EF-Tu/EF-1A subfamily. In terms of assembly, monomer.

The protein localises to the cytoplasm. The catalysed reaction is GTP + H2O = GDP + phosphate + H(+). In terms of biological role, GTP hydrolase that promotes the GTP-dependent binding of aminoacyl-tRNA to the A-site of ribosomes during protein biosynthesis. The polypeptide is Elongation factor Tu (Deinonema sp).